The chain runs to 299 residues: MTKIKIVVIVGPTAVGKTALGISLAKAFNGEIISGDSQQVYRQLDIGTAKATQEEQEAAVHHLIDIREVTESYSAYDFVQDAQKAISDIVSRGKLPIIVGGTGLYLQSLLEGYHLGGQVNQEAVKAYRNELEQLDDHDLYERLQVNNITIEQVNRRRAIRALELAQFADELENAETAYEPLIIGLNDDRQVIYDRINQRVDRMLENGLLEEAKWLYEHYPTVQASRGIGYKELFPYFVGEMTLAEASDQLKQNTRRFAKRQLTWFRNRMAVSFTAITAPDYPQVVHDRVRDFLGQKEKS.

11–18 is an ATP binding site; it reads GPTAVGKT. Residue 13–18 coordinates substrate; sequence TAVGKT. Residues 36–39 are interaction with substrate tRNA; it reads DSQQ.

This sequence belongs to the IPP transferase family. As to quaternary structure, monomer. The cofactor is Mg(2+).

It carries out the reaction adenosine(37) in tRNA + dimethylallyl diphosphate = N(6)-dimethylallyladenosine(37) in tRNA + diphosphate. Its function is as follows. Catalyzes the transfer of a dimethylallyl group onto the adenine at position 37 in tRNAs that read codons beginning with uridine, leading to the formation of N6-(dimethylallyl)adenosine (i(6)A). In Streptococcus pyogenes serotype M49 (strain NZ131), this protein is tRNA dimethylallyltransferase.